We begin with the raw amino-acid sequence, 156 residues long: Small ribosomal subunit protein uS7 (156 aa).

It belongs to the universal ribosomal protein uS7 family. In terms of assembly, part of the 30S ribosomal subunit. Contacts proteins S9 and S11.

In terms of biological role, one of the primary rRNA binding proteins, it binds directly to 16S rRNA where it nucleates assembly of the head domain of the 30S subunit. Is located at the subunit interface close to the decoding center, probably blocks exit of the E-site tRNA. The polypeptide is Small ribosomal subunit protein uS7 (Dictyoglomus turgidum (strain DSM 6724 / Z-1310)).